Reading from the N-terminus, the 206-residue chain is SOSS complex subunit B2 (206 aa).

A DNA-binding region (OB) is located at residues I26–Y89. Disordered stretches follow at residues E114–T146 and S166–R206. Residues L181–N196 show a composition bias toward polar residues.

The protein belongs to the SOSS-B family. SOSS-B2 subfamily. Component of the SOSS complex, composed of SOSS-B (SOSS-B1/NABP2 or SOSS-B2/NABP1), SOSS-A/INTS3 and SOSS-C/INIP. SOSS complexes containing SOSS-B1/NABP2 are more abundant than complexes containing SOSS-B2/NABP1.

The protein localises to the nucleus. In terms of biological role, component of the SOSS complex, a multiprotein complex that functions downstream of the MRN complex to promote DNA repair and G2/M checkpoint. In the SOSS complex, acts as a sensor of single-stranded DNA that binds to single-stranded DNA, in particular to polypyrimidines. The SOSS complex associates with DNA lesions and influences diverse endpoints in the cellular DNA damage response including cell-cycle checkpoint activation, recombinational repair and maintenance of genomic stability. Required for efficient homologous recombination-dependent repair of double-strand breaks (DSBs) and ATM-dependent signaling pathways. This Bos taurus (Bovine) protein is SOSS complex subunit B2 (NABP1).